The following is a 122-amino-acid chain: UPF0382 membrane protein SAUSA300_0565 (122 aa).

Transmembrane regions (helical) follow at residues L3 to A23, M46 to V66, A69 to L89, and I98 to F118.

It belongs to the UPF0382 family.

The protein localises to the cell membrane. This chain is UPF0382 membrane protein SAUSA300_0565, found in Staphylococcus aureus (strain USA300).